A 320-amino-acid polypeptide reads, in one-letter code: Malate dehydrogenase (320 aa).

NAD(+) is bound by residues 10 to 15 (GSGMIG) and Asp-34. Substrate is bound by residues Arg-83 and Arg-89. NAD(+) contacts are provided by residues Asn-96 and 119 to 121 (ITN). Substrate contacts are provided by Asn-121 and Arg-152. His-176 (proton acceptor) is an active-site residue.

Belongs to the LDH/MDH superfamily. MDH type 3 family.

The catalysed reaction is (S)-malate + NAD(+) = oxaloacetate + NADH + H(+). Catalyzes the reversible oxidation of malate to oxaloacetate. In Bartonella henselae (strain ATCC 49882 / DSM 28221 / CCUG 30454 / Houston 1) (Rochalimaea henselae), this protein is Malate dehydrogenase.